Here is a 183-residue protein sequence, read N- to C-terminus: Small ribosomal subunit protein uS4c (183 aa).

One can recognise an S4 RNA-binding domain in the interval 82 to 143 (MRLDNILFRL…KQRSKALIQN (62 aa)).

Belongs to the universal ribosomal protein uS4 family. In terms of assembly, part of the 30S ribosomal subunit. Contacts protein S5. The interaction surface between S4 and S5 is involved in control of translational fidelity.

The protein localises to the plastid. The protein resides in the chloroplast. Functionally, one of the primary rRNA binding proteins, it binds directly to 16S rRNA where it nucleates assembly of the body of the 30S subunit. Its function is as follows. With S5 and S12 plays an important role in translational accuracy. This is Small ribosomal subunit protein uS4c (rps4) from Crocosmia sp. (strain Porto Alegre 034).